The chain runs to 231 residues: Demethylmenaquinone methyltransferase (231 aa).

S-adenosyl-L-methionine-binding positions include T62, D80, 100–101 (DA), and S117.

It belongs to the class I-like SAM-binding methyltransferase superfamily. MenG/UbiE family.

It carries out the reaction a 2-demethylmenaquinol + S-adenosyl-L-methionine = a menaquinol + S-adenosyl-L-homocysteine + H(+). It participates in quinol/quinone metabolism; menaquinone biosynthesis; menaquinol from 1,4-dihydroxy-2-naphthoate: step 2/2. Its function is as follows. Methyltransferase required for the conversion of demethylmenaquinol (DMKH2) to menaquinol (MKH2). The polypeptide is Demethylmenaquinone methyltransferase (Mycobacterium marinum (strain ATCC BAA-535 / M)).